Consider the following 824-residue polypeptide: Lysine-specific histone demethylase 1B homolog (824 aa).

The disordered stretch occupies residues 1-31; it reads MTTELEIDDRKEEEAQIPGETSESEEGDEPV. An SWIRM domain is found at 245–346; it reads PFTDVIANIV…YGAFDFRIDP (102 aa). FAD-binding positions include 352 to 407, V579, E788, and 796 to 798; these read PKIA…AQII and QTM.

The protein belongs to the flavin monoamine oxidase family. Requires FAD as cofactor. In hermaphrodites, expressed in gut cells, embryonic cells and sheath cells. Not expressed in sperm or pharyngeal neurons.

Its subcellular location is the nucleus. The catalysed reaction is N(6),N(6)-dimethyl-L-lysyl(4)-[histone H3] + 2 A + 2 H2O = L-lysyl(4)-[histone H3] + 2 formaldehyde + 2 AH2. Histone demethylase that demethylates di-methylated 'Lys-4' of histone H3, a specific tag for epigenetic transcriptional activation, thereby acting as a corepressor. Acts by oxidizing the substrate by FAD to generate the corresponding imine that is subsequently hydrolyzed. Plays a role in the mitotic development of the germline. May be involved in H3 demethylation in mitotic cells including gut and embryonic cells. Plays a role in sensitivity upon interstrand cross-link DNA damage, probably by positively regulating the expression of mlh-1. Plays a role in developmental growth and lifespan regulation in response to ultraviolet-induced damage. No obvious role in larval development, sex chromosome segregation or for regulating meiotic crossover frequency. This chain is Lysine-specific histone demethylase 1B homolog, found in Caenorhabditis elegans.